A 237-amino-acid polypeptide reads, in one-letter code: tRNA1(Val) (adenine(37)-N6)-methyltransferase (237 aa).

Belongs to the methyltransferase superfamily. tRNA (adenine-N(6)-)-methyltransferase family.

The protein resides in the cytoplasm. The enzyme catalyses adenosine(37) in tRNA1(Val) + S-adenosyl-L-methionine = N(6)-methyladenosine(37) in tRNA1(Val) + S-adenosyl-L-homocysteine + H(+). Functionally, specifically methylates the adenine in position 37 of tRNA(1)(Val) (anticodon cmo5UAC). The chain is tRNA1(Val) (adenine(37)-N6)-methyltransferase from Tolumonas auensis (strain DSM 9187 / NBRC 110442 / TA 4).